Here is a 331-residue protein sequence, read N- to C-terminus: Cathepsin S (331 aa).

The signal sequence occupies residues M1 to A16. A propeptide spans Q17 to K114 (activation peptide). N104 carries N-linked (GlcNAc...) asparagine glycosylation. 4 cysteine pairs are disulfide-bonded: C126/C224, C136/C180, C170/C213, and C272/C320. C139 is an active-site residue. Residues H278 and N298 contribute to the active site.

This sequence belongs to the peptidase C1 family.

The protein resides in the lysosome. It is found in the secreted. Its subcellular location is the cytoplasmic vesicle. The protein localises to the phagosome. It catalyses the reaction Similar to cathepsin L, but with much less activity on Z-Phe-Arg-|-NHMec, and more activity on the Z-Val-Val-Arg-|-Xaa compound.. Its function is as follows. Thiol protease. Key protease responsible for the removal of the invariant chain from MHC class II molecules and MHC class II antigen presentation. The bond-specificity of this proteinase is in part similar to the specificities of cathepsin L. The protein is Cathepsin S (CTSS) of Canis lupus familiaris (Dog).